A 151-amino-acid chain; its full sequence is Transcriptional repressor NrdR (151 aa).

The segment at 3 to 34 (CPYCAYGESKVVDSRSTEDGSSIRRRRECLKC) is a zinc-finger region. The region spanning 49 to 139 (ILVIKKNMSR…VYRQFKDINT (91 aa)) is the ATP-cone domain.

This sequence belongs to the NrdR family. Requires Zn(2+) as cofactor.

Its function is as follows. Negatively regulates transcription of bacterial ribonucleotide reductase nrd genes and operons by binding to NrdR-boxes. This Clostridium botulinum (strain Loch Maree / Type A3) protein is Transcriptional repressor NrdR.